The sequence spans 163 residues: Nucleotide-binding protein YajQ (163 aa).

The protein belongs to the YajQ family.

In terms of biological role, nucleotide-binding protein. The chain is Nucleotide-binding protein YajQ from Salmonella agona (strain SL483).